Here is an 878-residue protein sequence, read N- to C-terminus: Multiple C2 and transmembrane domain-containing protein 2 (878 aa).

2 disordered regions span residues 20-40 and 143-178; these read LINL…DLRV and KPSL…ESTL. The segment covering 149 to 161 has biased composition (basic and acidic residues); that stretch reads DAPEEHDKTHGND. 3 C2 domains span residues 177–292, 334–452, and 486–607; these read TLGE…EHIL, SKSS…CLEL, and PSER…CYVL. Residues Asp210, Asp216, Asp263, Asp265, and Asp270 each coordinate Ca(2+). Ca(2+) contacts are provided by Asp525, Asp531, Asp577, Asp579, and Asp585. A helical transmembrane segment spans residues 694-714; that stretch reads FVVFLVTVWNFELYMIPLALL. A disordered region spans residues 728 to 752; the sequence is KASSTQDSQESTDVEEEGKEEEKES. A compositionally biased stretch (acidic residues) spans 737 to 746; that stretch reads ESTDVEEEGK. A helical membrane pass occupies residues 794–814; it reads PFLSLLACLILAITTVILYFI.

This sequence belongs to the MCTP family. Ca(2+) is required as a cofactor.

The protein localises to the membrane. In terms of biological role, might play a role in the development of cardiac outflow tract. In Mus musculus (Mouse), this protein is Multiple C2 and transmembrane domain-containing protein 2 (Mctp2).